Reading from the N-terminus, the 379-residue chain is Ascochitine biosynthesis cluster protein 8 (379 aa).

The next 3 helical transmembrane spans lie at 87–107, 116–136, and 141–161; these read ELIASVLALVARFGALVLDLE, VGPVSILGFCTGLLAGAVAAC, and IKVFDLACEVLAISFRLVVAL.

Its subcellular location is the membrane. Its pathway is mycotoxin biosynthesis. Functionally, part of the gene cluster that mediates the biosynthesis of the selective antifungal agent ascochitine, an o-quinone methide that plays a possible protective role against other microbial competitors in nature and is considered to be important for pathogenicity of legume-associated Didymella species. The pathway probably begins with the synthesis of a keto-aldehyde intermediate by the ascochitine non-reducing polyketide synthase pksAC from successive condensations of 4 malonyl-CoA units, presumably with a simple acetyl-CoA starter unit. Release of the keto-aldehyde intermediate is consistent with the presence of the C-terminal reductive release domain. The HR-PKS (orf7) probably makes a diketide starter unit which is passed to the non-reducing polyketide synthase pksAC for further extension, producing ascochital and ascochitine. The aldehyde dehydrogenase (orf1), the 2-oxoglutarate-dependent dioxygenase (orf3) and the dehydrogenase (orf9) are probably involved in subsequent oxidations of methyl groups to the carboxylic acid of the heterocyclic ring. The ascochitine gene cluster also includes a gene encoding a short peptide with a cupin domain (orf2) that is often found in secondary metabolite gene clusters and which function has still to be determined. This chain is Ascochitine biosynthesis cluster protein 8, found in Didymella fabae (Leaf and pod spot disease fungus).